The following is a 143-amino-acid chain: Transcriptional regulator MraZ (143 aa).

2 SpoVT-AbrB domains span residues 5–47 (SHTP…PLAE) and 76–119 (ASDD…DSQR).

The protein belongs to the MraZ family. As to quaternary structure, forms oligomers.

It localises to the cytoplasm. The protein resides in the nucleoid. This is Transcriptional regulator MraZ from Parafrankia sp. (strain EAN1pec).